A 55-amino-acid polypeptide reads, in one-letter code: Large ribosomal subunit protein bL33B (55 aa).

It belongs to the bacterial ribosomal protein bL33 family.

This chain is Large ribosomal subunit protein bL33B (rpmG2), found in Mycobacterium tuberculosis (strain CDC 1551 / Oshkosh).